Here is a 256-residue protein sequence, read N- to C-terminus: 5-keto-4-deoxy-D-glucarate aldolase (256 aa).

His50 serves as the catalytic Proton acceptor. Gln151 provides a ligand contact to substrate. Glu153 provides a ligand contact to Mg(2+). Substrate contacts are provided by Ser178 and Asp179. Asp179 is a binding site for Mg(2+).

The protein belongs to the HpcH/HpaI aldolase family. KDGluc aldolase subfamily. Homohexamer; trimer of dimers. Mg(2+) is required as a cofactor.

It catalyses the reaction 5-dehydro-4-deoxy-D-glucarate = 2-hydroxy-3-oxopropanoate + pyruvate. It carries out the reaction 2-dehydro-3-deoxy-D-glucarate = 2-hydroxy-3-oxopropanoate + pyruvate. Its pathway is carbohydrate acid metabolism; galactarate degradation; D-glycerate from galactarate: step 2/3. In terms of biological role, catalyzes the reversible retro-aldol cleavage of both 5-keto-4-deoxy-D-glucarate and 2-keto-3-deoxy-D-glucarate to pyruvate and tartronic semialdehyde. This Salmonella agona (strain SL483) protein is 5-keto-4-deoxy-D-glucarate aldolase.